The primary structure comprises 751 residues: Lanosterol synthase erg7A (751 aa).

The segment at 1-22 (MTGGPIASWRTAAQGHLTPDEN) is disordered. The stretch at 147 to 189 (ATEIKRYLFARQHPEDGGWGLHIEAHSSVFGTCMNYVALRLIG) is one PFTB 1 repeat. Residue Asp481 is the Proton donor of the active site. PFTB repeat units lie at residues 508 to 553 (LKDS…MIGY), 585 to 625 (KDKA…ASVG), and 634 to 675 (ARRG…VQTA).

The protein belongs to the terpene cyclase/mutase family.

It is found in the lipid droplet. The protein resides in the endoplasmic reticulum membrane. It catalyses the reaction (S)-2,3-epoxysqualene = lanosterol. The protein operates within steroid metabolism; ergosterol biosynthesis. Lanosterol synthase; part of the third module of ergosterol biosynthesis pathway that includes the late steps of the pathway. ERG7A and ERG7B catalyze the cyclization of (S)-2,3 oxidosqualene to lanosterol, a reaction that forms the sterol core. The third module or late pathway involves the ergosterol synthesis itself through consecutive reactions that mainly occur in the endoplasmic reticulum (ER) membrane. Firstly, the squalene synthase erg9 catalyzes the condensation of 2 farnesyl pyrophosphate moieties to form squalene, which is the precursor of all steroids. Squalene synthase is crucial for balancing the incorporation of farnesyl diphosphate (FPP) into sterol and nonsterol isoprene synthesis. Secondly, squalene is converted into lanosterol by the consecutive action of the squalene epoxidase erg1 and the lanosterol synthase erg7. Then, the delta(24)-sterol C-methyltransferase erg6 methylates lanosterol at C-24 to produce eburicol. Eburicol is the substrate of the sterol 14-alpha demethylase encoded by cyp51A and cyp51B, to yield 4,4,24-trimethyl ergosta-8,14,24(28)-trienol. The C-14 reductase erg24 then reduces the C14=C15 double bond which leads to 4,4-dimethylfecosterol. A sequence of further demethylations at C-4, involving the C-4 demethylation complex containing the C-4 methylsterol oxidases erg25A or erg25B, the sterol-4-alpha-carboxylate 3-dehydrogenase erg26 and the 3-keto-steroid reductase erg27, leads to the production of fecosterol via 4-methylfecosterol. The C-8 sterol isomerase erg2 then catalyzes the reaction which results in unsaturation at C-7 in the B ring of sterols and thus converts fecosterol to episterol. The sterol-C5-desaturase erg3B then catalyzes the introduction of a C-5 double bond in the B ring to produce 5-dehydroepisterol. The 2 other sterol-C5-desaturases, erg3A and erg3C, seem to be less important in ergosterol biosynthesis. The C-22 sterol desaturase erg5 further converts 5-dehydroepisterol into ergosta-5,7,22,24(28)-tetraen-3beta-ol by forming the C-22(23) double bond in the sterol side chain. Finally, ergosta-5,7,22,24(28)-tetraen-3beta-ol is substrate of the C-24(28) sterol reductases erg4A and erg4B to produce ergosterol. Possible alternative sterol biosynthetic pathways might exist from fecosterol to ergosterol, depending on the activities of the erg3 isoforms. The polypeptide is Lanosterol synthase erg7A (Aspergillus fumigatus (strain ATCC MYA-4609 / CBS 101355 / FGSC A1100 / Af293) (Neosartorya fumigata)).